Consider the following 379-residue polypeptide: Cytochrome bd-I ubiquinol oxidase subunit 2 (379 aa).

At M1 the chain carries N-formylmethionine. Residues 1-8 lie on the Cytoplasmic side of the membrane; the sequence is MIDYEVLR. Residues 9–28 form a helical membrane-spanning segment; it reads FIWWLLVGVLLIGFAVTDGF. Residues 29 to 79 are Periplasmic-facing; sequence DMGVGMLTRFLGRNDTERRIMINSIAPHWDGNQVWLITAGGALFAAWPMVY. A helical membrane pass occupies residues 80-99; that stretch reads AAAFSGFYVAMILVLASLFF. The Cytoplasmic portion of the chain corresponds to 100 to 122; the sequence is RPVGFDYRSKIEETRWRNMWDWG. A helical transmembrane segment spans residues 123–142; the sequence is IFIGSFVPPLVIGVAFGNLL. Over 143–164 the chain is Periplasmic; the sequence is QGVPFNVDEYLRLYYTGNFFQL. The chain crosses the membrane as a helical span at residues 165-184; the sequence is LNPFGLLAGVVSVGMIITQG. The Cytoplasmic portion of the chain corresponds to 185-205; sequence ATYLQMRTVGELHLRTRATAQ. A helical transmembrane segment spans residues 206 to 225; that stretch reads VAALVTLVCFALAGVWVMYG. Over 226-262 the chain is Periplasmic; the sequence is IDGYVVKSTMDHYAASNPLNKEVVREAGAWLVNFNNT. A helical membrane pass occupies residues 263 to 282; sequence PILWAIPALGVVLPLLTILT. Residues 283-292 lie on the Cytoplasmic side of the membrane; the sequence is ARMDKAAWAF. A helical membrane pass occupies residues 293–312; it reads VFSSLTLACIILTAGIAMFP. Residues 313–336 lie on the Periplasmic side of the membrane; sequence FVMPSSTMMNASLTMWDATSSQLT. The chain crosses the membrane as a helical span at residues 337–356; that stretch reads LNVMTWVAVVLVPIILLYTA. Over 357–379 the chain is Cytoplasmic; the sequence is WCYWKMFGRITKEDIERNTHSLY.

It belongs to the cytochrome ubiquinol oxidase subunit 2 family. In terms of assembly, heterodimer of subunits I and II. It depends on heme b as a cofactor. The cofactor is heme d cis-diol.

It localises to the cell inner membrane. It carries out the reaction 2 a ubiquinol + O2(in) + 4 H(+)(in) = 2 a ubiquinone + 2 H2O(in) + 4 H(+)(out). It participates in energy metabolism; oxidative phosphorylation. In terms of biological role, a terminal oxidase that produces a proton motive force by the vectorial transfer of protons across the inner membrane. It is the component of the aerobic respiratory chain of E.coli that predominates when cells are grown at low aeration. Generates a proton motive force using protons and electrons from opposite sides of the membrane to generate H(2)O, transferring 1 proton/electron. This chain is Cytochrome bd-I ubiquinol oxidase subunit 2 (cydB), found in Escherichia coli O157:H7.